Here is a 395-residue protein sequence, read N- to C-terminus: Yellow-related salivary protein M35 (395 aa).

Positions 1-18 are cleaved as a signal peptide; sequence MKLILTVLAFLSLQVALS.

This sequence belongs to the major royal jelly protein family. Salivary gland (at protein level).

Its subcellular location is the secreted. Functionally, probably modulates blood feeding of sand flies on vertebrate species by binding and sequestering different mediators involved in the host response. Functions as a chemoattractant for host neutrophils; likely acts through a G-protein-coupled receptor and effect is dependent on calcium influx and phosphatidylinositol 3-kinases (PI3K) activity. Its function is as follows. (Microbial infection) Probably enhances infection caused by Leishmania species in the host through augmentation of host neutrophil recruitment into the skin. The protein is Yellow-related salivary protein M35 of Phlebotomus duboscqi (Sandfly).